We begin with the raw amino-acid sequence, 68 residues long: Pleurocidin-like peptide WF4 (68 aa).

Residues 1-22 (MKFTATFLMMFIFVLMVEPGEC) form the signal peptide. A propeptide spanning residues 48–68 (GEQQDLDKRAVDEDPNVIVFE) is cleaved from the precursor.

This sequence belongs to the pleurocidin family.

It localises to the secreted. Antimicrobial peptide. In Pseudopleuronectes americanus (Winter flounder), this protein is Pleurocidin-like peptide WF4 (ple4).